A 475-amino-acid polypeptide reads, in one-letter code: Vitronectin (475 aa).

Residues 1 to 19 (MAPLRPIFTLALLLWVVLA) form the signal peptide. An SMB domain is found at 20–63 (DQESCKDRCTEGFNANRKCQCDELCSYYQSCCADYAAECKPQVT). 7 cysteine pairs are disulfide-bonded: Cys-24-Cys-28, Cys-24-Cys-40, Cys-28-Cys-58, Cys-38-Cys-40, Cys-38-Cys-51, Cys-44-Cys-50, and Cys-51-Cys-58. Residues 64–66 (RGD) carry the Cell attachment site motif. Thr-69 carries the phosphothreonine modification. 3 positions are modified to sulfotyrosine: Tyr-75, Tyr-78, and Tyr-80. Residue Asn-87 is glycosylated (N-linked (GlcNAc...) asparagine). The interval 87–123 (NASVHAQPESPTVGQEPTLSPDLQTEGGAEPTHEVPL) is disordered. Positions 95-109 (ESPTVGQEPTLSPDL) are enriched in polar residues. 3 Hemopexin repeats span residues 158–202 (GKPF…VWGI), 203–250 (EGPI…FSGI), and 251–305 (PDNV…FEHF). 2 N-linked (GlcNAc...) asparagine glycosylation sites follow: Asn-169 and Asn-242. Sulfotyrosine occurs at positions 279 and 282. Residue Ser-312 is modified to Phosphoserine. Residues 359-391 (LTPSPSAKKQKSRRRSRKRYRSRYGRGRSQNSR) form a disordered region. A compositionally biased stretch (basic residues) spans 366-384 (KKQKSRRRSRKRYRSRYGR). The glycosaminoglycan binding region stretch occupies residues 366-392 (KKQKSRRRSRKRYRSRYGRGRSQNSRR). At Ser-394 the chain carries Phosphoserine. One copy of the Hemopexin 4 repeat lies at 419 to 469 (TSWLKPATSEPIQSVYFFSGDKYYRVNLRTQRVDTVNPPYPRSIAQYWLGC).

As to quaternary structure, interacts with SERPINE1/PAI1 and C1QBP. Monomer. In terms of processing, sulfated on tyrosine residues. Post-translationally, N- and O-glycosylated. It has been suggested that the active SMB domain may be permitted considerable disulfide bond heterogeneity or variability, thus two alternate disulfide patterns based on 3D structures are described with 1 disulfide bond conserved in both. In terms of tissue distribution, plasma.

The protein localises to the secreted. It localises to the extracellular space. Functionally, vitronectin is a cell adhesion and spreading factor found in serum and tissues. Vitronectin interact with glycosaminoglycans and proteoglycans. Is recognized by certain members of the integrin family and serves as a cell-to-substrate adhesion molecule. Inhibitor of the membrane-damaging effect of the terminal cytolytic complement pathway. The polypeptide is Vitronectin (VTN) (Oryctolagus cuniculus (Rabbit)).